The following is an 862-amino-acid chain: Cytosolic carboxypeptidase 2 (862 aa).

The Peptidase M14 domain occupies 359-629; it reads YPYTYTDLQC…HVCDTLLDFC (271 aa). Positions 425, 428, and 521 each coordinate Zn(2+). Glutamate 593 serves as the catalytic Proton donor/acceptor. Disordered stretches follow at residues 669–692, 704–728, and 750–836; these read SDIP…DGPP, NQKT…EQYQ, and STLQ…PNWS. Residues 674–689 are compositionally biased toward low complexity; sequence SDIESSTSGSDSSLSD. Residues 711–721 show a composition bias toward basic residues; sequence NPKKKRLQTRK. Polar residues predominate over residues 813–825; the sequence is ASCSPKRSTNSSL.

The protein belongs to the peptidase M14 family. Interacts with RARRES1, KIF11 and MAPRE1. Requires Zn(2+) as cofactor. As to expression, widely expressed. Expressed in tissues with motile cilia such as testis, lung and trachea. Also detected in brain, eye, muscle, pancreas, intestine, stomach, pituitary, spleen, adrenal and kidney. Expressed in mitral and granular cells in brain.

The protein resides in the cytoplasm. It is found in the cytosol. Its subcellular location is the cytoskeleton. It localises to the microtubule organizing center. The protein localises to the centrosome. The protein resides in the centriole. It is found in the cilium basal body. The enzyme catalyses (L-glutamyl)(n+1)-gamma-L-glutamyl-L-glutamyl-[protein] + H2O = (L-glutamyl)(n)-gamma-L-glutamyl-L-glutamyl-[protein] + L-glutamate. Inhibited by RARRES1. In terms of biological role, metallocarboxypeptidase that mediates deglutamylation of tubulin and non-tubulin target proteins. Catalyzes the removal of polyglutamate side chains present on the gamma-carboxyl group of glutamate residues within the C-terminal tail of tubulin protein. Specifically cleaves tubulin long-side-chains, while it is not able to remove the branching point glutamate. Also catalyzes the removal of polyglutamate residues from the carboxy-terminus of non-tubulin proteins such as MYLK. The sequence is that of Cytosolic carboxypeptidase 2 from Mus musculus (Mouse).